Consider the following 112-residue polypeptide: uncharacterized protein (112 aa).

Residues 90–112 form a disordered region; the sequence is KNFNNSKNDQIKKKKIDNNQVNL.

This is an uncharacterized protein from Buchnera aphidicola subsp. Acyrthosiphon pisum (strain APS) (Acyrthosiphon pisum symbiotic bacterium).